The following is a 132-amino-acid chain: Small ribosomal subunit protein uS11 (132 aa).

Belongs to the universal ribosomal protein uS11 family. Part of the 30S ribosomal subunit. Interacts with proteins S7 and S18. Binds to IF-3.

Located on the platform of the 30S subunit, it bridges several disparate RNA helices of the 16S rRNA. Forms part of the Shine-Dalgarno cleft in the 70S ribosome. The protein is Small ribosomal subunit protein uS11 of Cupriavidus pinatubonensis (strain JMP 134 / LMG 1197) (Cupriavidus necator (strain JMP 134)).